Here is an 86-residue protein sequence, read N- to C-terminus: Neuropeptide-like 3 (86 aa).

Residues Met1–Ala16 form the signal peptide. 2 propeptides span residues Ala17 to Gln50 and Ala63 to Lys75. Position 85 is an isoleucine amide (Ile85).

It is found in the secreted. The protein is Neuropeptide-like 3 (Nplp3) of Drosophila yakuba (Fruit fly).